A 176-amino-acid polypeptide reads, in one-letter code: MSSKQEPVILGKLGSSFGIKGWLKITTYTDSVEGIFDYSPWLIKEQGEWREVKVAQWRFQGKAVVACLEGVTTRDEAQALTNCEIAVPAEQMQDLPEDEFYWRDLIGCEVINTKGYNMGTVQEIVETGSNDVLLVKANAKDGFGKAERMIPFVTDQFIQKVDLAAKQILVDWDPDF.

The PRC barrel domain maps to 97-176 (EDEFYWRDLI…QILVDWDPDF (80 aa)).

The protein belongs to the RimM family. Binds ribosomal protein uS19.

The protein localises to the cytoplasm. Functionally, an accessory protein needed during the final step in the assembly of 30S ribosomal subunit, possibly for assembly of the head region. Essential for efficient processing of 16S rRNA. May be needed both before and after RbfA during the maturation of 16S rRNA. It has affinity for free ribosomal 30S subunits but not for 70S ribosomes. This is Ribosome maturation factor RimM from Shewanella halifaxensis (strain HAW-EB4).